The following is a 195-amino-acid chain: Large ribosomal subunit protein bL17 (195 aa).

Positions 125–195 are disordered; that stretch reads ANRARRVGAS…PTQDSDADKS (71 aa). The segment covering 136–152 has biased composition (low complexity); sequence QTAPVAAAAAPQAAVEP. Composition is skewed to acidic residues over residues 153-173 and 183-195; these read EATE…EDTT and TDDP…ADKS.

The protein belongs to the bacterial ribosomal protein bL17 family. Part of the 50S ribosomal subunit. Contacts protein L32.

The sequence is that of Large ribosomal subunit protein bL17 from Mycobacterium sp. (strain JLS).